We begin with the raw amino-acid sequence, 260 residues long: 3'-5' ssDNA/RNA exonuclease TatD (260 aa).

Glu92, His128, and His153 together coordinate a divalent metal cation.

This sequence belongs to the metallo-dependent hydrolases superfamily. TatD-type hydrolase family. TatD subfamily. In terms of assembly, monomer. Mg(2+) is required as a cofactor.

The protein resides in the cytoplasm. Its function is as follows. 3'-5' exonuclease that prefers single-stranded DNA and RNA. May play a role in the H(2)O(2)-induced DNA damage repair. This Pantoea vagans (strain C9-1) (Pantoea agglomerans (strain C9-1)) protein is 3'-5' ssDNA/RNA exonuclease TatD.